Reading from the N-terminus, the 218-residue chain is Ohanin-like protein (218 aa).

Residues 1–40 (MSPSAGFQFSLYFLQTKKVLWKLTGLCYILLFTLCFFADQ) form the signal peptide. Positions 41–48 (ENGGKALA) are excised as a propeptide. The B30.2/SPRY domain occupies 49–155 (SPPGIWKRAD…RIWQTGLWWL (107 aa)). Positions 156–218 (RHLETDPGRV…LGGTVSLTTL (63 aa)) are excised as a propeptide.

Belongs to the ohanin/vespryn family. As to expression, expressed by the venom gland.

It localises to the secreted. Its function is as follows. Neurotoxin that produces dose-dependent hypolocomotion and hyperalgesia in mice. May directly act on the central nervous system, as it is 6500-fold more potent when administered intracerebroventricularly than intraperitoneal. The chain is Ohanin-like protein from Lachesis muta muta (Bushmaster).